We begin with the raw amino-acid sequence, 868 residues long: DNA topoisomerase 1 (868 aa).

The Toprim domain maps to K3 to I147. Residue E9 participates in Mg(2+) binding. The segment at I34–R70 is disordered. D116 provides a ligand contact to Mg(2+). One can recognise a Topo IA-type catalytic domain in the interval D163 to L580. Residues S197–Q202 form an interaction with DNA region. The O-(5'-phospho-DNA)-tyrosine intermediate role is filled by Y324. 3 C4-type zinc fingers span residues C602–C633, C664–C691, and C713–C738.

This sequence belongs to the type IA topoisomerase family. In terms of assembly, monomer. Requires Mg(2+) as cofactor.

The catalysed reaction is ATP-independent breakage of single-stranded DNA, followed by passage and rejoining.. In terms of biological role, releases the supercoiling and torsional tension of DNA, which is introduced during the DNA replication and transcription, by transiently cleaving and rejoining one strand of the DNA duplex. Introduces a single-strand break via transesterification at a target site in duplex DNA. The scissile phosphodiester is attacked by the catalytic tyrosine of the enzyme, resulting in the formation of a DNA-(5'-phosphotyrosyl)-enzyme intermediate and the expulsion of a 3'-OH DNA strand. The free DNA strand then undergoes passage around the unbroken strand, thus removing DNA supercoils. Finally, in the religation step, the DNA 3'-OH attacks the covalent intermediate to expel the active-site tyrosine and restore the DNA phosphodiester backbone. The polypeptide is DNA topoisomerase 1 (Pseudomonas aeruginosa (strain ATCC 15692 / DSM 22644 / CIP 104116 / JCM 14847 / LMG 12228 / 1C / PRS 101 / PAO1)).